Here is a 178-residue protein sequence, read N- to C-terminus: MKTELIAQLKKTIITVKDFPKPGILFYDITPILLDPKLFDQVISVMAEVAKKSNADMIASPESRGFLFGVPLANKLKLPFVLVRKQNKLPRATFSASYDLEYGKNNVIEIHQDAIKPNSKVMIVDDLLATAGTVDAISRLVKQAKSEVVSYSFLIRLKDLGGIDKLDQTKPIDYILEY.

It belongs to the purine/pyrimidine phosphoribosyltransferase family. In terms of assembly, homodimer.

The protein localises to the cytoplasm. The enzyme catalyses AMP + diphosphate = 5-phospho-alpha-D-ribose 1-diphosphate + adenine. It participates in purine metabolism; AMP biosynthesis via salvage pathway; AMP from adenine: step 1/1. Its function is as follows. Catalyzes a salvage reaction resulting in the formation of AMP, that is energically less costly than de novo synthesis. This Mycoplasmoides gallisepticum (strain R(low / passage 15 / clone 2)) (Mycoplasma gallisepticum) protein is Adenine phosphoribosyltransferase.